A 55-amino-acid chain; its full sequence is Large ribosomal subunit protein bL33B (55 aa).

The protein belongs to the bacterial ribosomal protein bL33 family.

The protein is Large ribosomal subunit protein bL33B of Mycolicibacterium paratuberculosis (strain ATCC BAA-968 / K-10) (Mycobacterium paratuberculosis).